A 229-amino-acid chain; its full sequence is Nectarin-1 (229 aa).

An N-terminal signal peptide occupies residues 1–32 (MAAFGIKSKIFQIMEMTILFLFAISIDRYCFA). Cys-42 and Cys-57 are oxidised to a cystine. N-linked (GlcNAc...) asparagine glycosylation is present at Asn-60. One can recognise a Cupin type-1 domain in the interval 69–217 (FAISKPGATN…TFQINIEDVQ (149 aa)). Positions 117, 119, 124, and 163 each coordinate Mn(2+).

The protein belongs to the germin family. In terms of assembly, monomer. In the absence of manganese, it forms tetrameric and pentameric forms which show superoxide dismutase activity. The cofactor is Mn(2+). Post-translationally, glycosylated.

The protein localises to the secreted. Its subcellular location is the extracellular space. It localises to the apoplast. It catalyses the reaction 2 superoxide + 2 H(+) = H2O2 + O2. Functionally, may interact with bacterial adhesins thereby protecting the reproductive tissues from microbial attack. Has no oxalate oxidase activity. The sequence is that of Nectarin-1 (NEC1) from Nicotiana plumbaginifolia (Leadwort-leaved tobacco).